Consider the following 315-residue polypeptide: Aldo-keto reductase family 4 member C11 (315 aa).

Ala2 bears the N-acetylalanine mark. Residues 23-24 (TW) and Asp47 contribute to the NADP(+) site. The active-site Proton donor is the Tyr52. NADP(+) contacts are provided by residues His114, 158-159 (SN), Gln180, 207-213 (SPLGSPG), 256-258 (KST), and 262-266 (RIREN). The residue at position 295 (Ser295) is a Phosphoserine.

This sequence belongs to the aldo/keto reductase family.

Functionally, oxidoreductase that may act on a broad range of substrates such as ketosteroids, aldehydes, ketones and sugars. This Arabidopsis thaliana (Mouse-ear cress) protein is Aldo-keto reductase family 4 member C11 (AKR4C11).